A 232-amino-acid polypeptide reads, in one-letter code: Phosphoribosylformylglycinamidine synthase subunit PurQ (232 aa).

The Glutamine amidotransferase type-1 domain maps to 2–232 (KIAILQFGGT…SMVDYITENF (231 aa)). The active-site Nucleophile is the Cys-86. Residues His-203 and Glu-205 contribute to the active site.

As to quaternary structure, part of the FGAM synthase complex composed of 1 PurL, 1 PurQ and 2 PurS subunits.

It is found in the cytoplasm. It catalyses the reaction N(2)-formyl-N(1)-(5-phospho-beta-D-ribosyl)glycinamide + L-glutamine + ATP + H2O = 2-formamido-N(1)-(5-O-phospho-beta-D-ribosyl)acetamidine + L-glutamate + ADP + phosphate + H(+). The catalysed reaction is L-glutamine + H2O = L-glutamate + NH4(+). Its pathway is purine metabolism; IMP biosynthesis via de novo pathway; 5-amino-1-(5-phospho-D-ribosyl)imidazole from N(2)-formyl-N(1)-(5-phospho-D-ribosyl)glycinamide: step 1/2. Its function is as follows. Part of the phosphoribosylformylglycinamidine synthase complex involved in the purines biosynthetic pathway. Catalyzes the ATP-dependent conversion of formylglycinamide ribonucleotide (FGAR) and glutamine to yield formylglycinamidine ribonucleotide (FGAM) and glutamate. The FGAM synthase complex is composed of three subunits. PurQ produces an ammonia molecule by converting glutamine to glutamate. PurL transfers the ammonia molecule to FGAR to form FGAM in an ATP-dependent manner. PurS interacts with PurQ and PurL and is thought to assist in the transfer of the ammonia molecule from PurQ to PurL. The protein is Phosphoribosylformylglycinamidine synthase subunit PurQ of Methanosarcina barkeri (strain Fusaro / DSM 804).